Reading from the N-terminus, the 357-residue chain is 4-hydroxy-3-methylbut-2-en-1-yl diphosphate synthase (flavodoxin) (357 aa).

Positions 264, 267, 299, and 306 each coordinate [4Fe-4S] cluster.

The protein belongs to the IspG family. It depends on [4Fe-4S] cluster as a cofactor.

The enzyme catalyses (2E)-4-hydroxy-3-methylbut-2-enyl diphosphate + oxidized [flavodoxin] + H2O + 2 H(+) = 2-C-methyl-D-erythritol 2,4-cyclic diphosphate + reduced [flavodoxin]. It participates in isoprenoid biosynthesis; isopentenyl diphosphate biosynthesis via DXP pathway; isopentenyl diphosphate from 1-deoxy-D-xylulose 5-phosphate: step 5/6. Functionally, converts 2C-methyl-D-erythritol 2,4-cyclodiphosphate (ME-2,4cPP) into 1-hydroxy-2-methyl-2-(E)-butenyl 4-diphosphate. This chain is 4-hydroxy-3-methylbut-2-en-1-yl diphosphate synthase (flavodoxin), found in Campylobacter jejuni subsp. jejuni serotype O:2 (strain ATCC 700819 / NCTC 11168).